We begin with the raw amino-acid sequence, 78 residues long: MSRVCQVTGKRPAVGNNRSHANNATKRRFLPNLHTHRFWVEGEKRFVSLRVSAKGMRIIDKRGVEVVLAELRASGVKV.

Residues 1-24 (MSRVCQVTGKRPAVGNNRSHANNA) form a disordered region.

Belongs to the bacterial ribosomal protein bL28 family.

The polypeptide is Large ribosomal subunit protein bL28 (Aeromonas salmonicida (strain A449)).